The following is a 167-amino-acid chain: Phosphopantetheine adenylyltransferase (167 aa).

Ser9 lines the substrate pocket. ATP-binding positions include 9–10 and His17; that span reads SF. Substrate-binding residues include Lys41, Leu73, and Lys87. ATP contacts are provided by residues 88–90, Glu98, and 123–129; these read GLR and YSYLSSS.

This sequence belongs to the bacterial CoaD family. As to quaternary structure, homohexamer. The cofactor is Mg(2+).

The protein localises to the cytoplasm. The catalysed reaction is (R)-4'-phosphopantetheine + ATP + H(+) = 3'-dephospho-CoA + diphosphate. Its pathway is cofactor biosynthesis; coenzyme A biosynthesis; CoA from (R)-pantothenate: step 4/5. Reversibly transfers an adenylyl group from ATP to 4'-phosphopantetheine, yielding dephospho-CoA (dPCoA) and pyrophosphate. The chain is Phosphopantetheine adenylyltransferase from Caldicellulosiruptor bescii (strain ATCC BAA-1888 / DSM 6725 / KCTC 15123 / Z-1320) (Anaerocellum thermophilum).